The primary structure comprises 539 residues: GMP synthase [glutamine-hydrolyzing] (539 aa).

Residues 4–202 (KILILDFGSQ…VLGIAGCKPD (199 aa)) form the Glutamine amidotransferase type-1 domain. C81 acts as the Nucleophile in catalysis. Active-site residues include H176 and E178. One can recognise a GMPS ATP-PPase domain in the interval 203–395 (WVMRDHIEEA…LGLPPEMVYR (193 aa)). 230-236 (SGGVDSS) serves as a coordination point for ATP.

In terms of assembly, homodimer.

It carries out the reaction XMP + L-glutamine + ATP + H2O = GMP + L-glutamate + AMP + diphosphate + 2 H(+). The protein operates within purine metabolism; GMP biosynthesis; GMP from XMP (L-Gln route): step 1/1. In terms of biological role, catalyzes the synthesis of GMP from XMP. This Cupriavidus necator (strain ATCC 17699 / DSM 428 / KCTC 22496 / NCIMB 10442 / H16 / Stanier 337) (Ralstonia eutropha) protein is GMP synthase [glutamine-hydrolyzing].